A 285-amino-acid polypeptide reads, in one-letter code: 33 kDa chaperonin (285 aa).

2 disulfides stabilise this stretch: Cys228-Cys230 and Cys261-Cys264.

It belongs to the HSP33 family. In terms of processing, under oxidizing conditions two disulfide bonds are formed involving the reactive cysteines. Under reducing conditions zinc is bound to the reactive cysteines and the protein is inactive.

The protein resides in the cytoplasm. Redox regulated molecular chaperone. Protects both thermally unfolding and oxidatively damaged proteins from irreversible aggregation. Plays an important role in the bacterial defense system toward oxidative stress. The sequence is that of 33 kDa chaperonin from Hahella chejuensis (strain KCTC 2396).